Here is a 121-residue protein sequence, read N- to C-terminus: Small ribosomal subunit protein uS13 (121 aa).

A disordered region spans residues 94-121 (GLPMRGQRTRTNARTRKGPRKAAAALKK).

Belongs to the universal ribosomal protein uS13 family. Part of the 30S ribosomal subunit. Forms a loose heterodimer with protein S19. Forms two bridges to the 50S subunit in the 70S ribosome.

In terms of biological role, located at the top of the head of the 30S subunit, it contacts several helices of the 16S rRNA. In the 70S ribosome it contacts the 23S rRNA (bridge B1a) and protein L5 of the 50S subunit (bridge B1b), connecting the 2 subunits; these bridges are implicated in subunit movement. Contacts the tRNAs in the A and P-sites. This Polaromonas sp. (strain JS666 / ATCC BAA-500) protein is Small ribosomal subunit protein uS13.